We begin with the raw amino-acid sequence, 476 residues long: Scopoletin glucosyltransferase (476 aa).

Residue His-16 is the Proton acceptor of the active site. His-16 contributes to the an anthocyanidin binding site. Catalysis depends on Asp-119, which acts as the Charge relay. Residues Ala-343, Gln-345, His-360, Trp-363, Asn-364, Ser-365, and Glu-368 each contribute to the UDP-alpha-D-glucose site. Ala-383 is an an anthocyanidin binding site. UDP-alpha-D-glucose is bound by residues Glu-384 and Gln-385.

This sequence belongs to the UDP-glycosyltransferase family.

It catalyses the reaction scopoletin + UDP-alpha-D-glucose = scopolin + UDP + H(+). Glucosyltransferase acting preferentially on aromatic substrates of the phenylpropanoid types. The best substrates are scopoletin and esculetin. Required for full resistance to virus. The polypeptide is Scopoletin glucosyltransferase (TOGT1) (Nicotiana tabacum (Common tobacco)).